A 367-amino-acid chain; its full sequence is Isoflavone 4'-O-methyltransferase (367 aa).

S-adenosyl-L-methionine-binding positions include 209–212 (VGGG), aspartate 233, 233–234 (DQ), 253–254 (DM), and lysine 267. Catalysis depends on histidine 271, which acts as the Proton acceptor.

It belongs to the class I-like SAM-binding methyltransferase superfamily. Cation-independent O-methyltransferase family. COMT subfamily.

The catalysed reaction is a 4'-hydroxyisoflavone + S-adenosyl-L-methionine = a 4'-methoxyisoflavone + S-adenosyl-L-homocysteine + H(+). The enzyme catalyses (2R,3S)-2,4',7-trihydroxyisoflavanone + S-adenosyl-L-methionine = (2R,3S)-2,7-dihydroxy-4'-methoxyisoflavanone + S-adenosyl-L-homocysteine + H(+). Its function is as follows. 2-hydroxyisoflavanone 4'-O-methyltransferase involved in the biosynthesis of formononetin. Can use 2,7,4'-trihydroxyisoflavanone, (+)-6a-hydroxymaackiain or medicarpin as substrate, but not daidzein or (-)-6a-hydroxymaackiain. The polypeptide is Isoflavone 4'-O-methyltransferase (HI4'OMT) (Glycyrrhiza echinata (Licorice)).